Here is a 378-residue protein sequence, read N- to C-terminus: MKFPEFKDYYQQLISTSSISSTDSSWDEGNAEVINKLAQWCEDLGCEVEIEEIEKGKLNLLAKLGSGEGGLLLAGHTDTVPYDEGRWNYEPHALTEANDRFYGLGTADMKGFFAFILEAIKNINWKDQSKPLYILATCDEETTMLGARHFASNTKIQPDYCIIGEPTSLKPIRGHKGHVANAIRVTGKSGHSSDPAHGVNALEIMNEIMFALMTLKNKLVKEYHNPGFSIPYPTLNLGHIHGGDSPNRICGCCELHYDVRPLPGISLDGLDNMLRDALKEIEAKWPGRIDITPLHEPIPGYECSADSPIVTSTADICGQDVETVNYCTEAPFLQDLCPTLVLGPGSIEQAHQPDEYLAFSFIDPTISILSKLMYKHCF.

His-76 serves as a coordination point for Zn(2+). Residue Asp-78 is part of the active site. Zn(2+) is bound at residue Asp-108. Glu-140 is a catalytic residue. 3 residues coordinate Zn(2+): Glu-141, Glu-165, and His-351.

This sequence belongs to the peptidase M20A family. ArgE subfamily. In terms of assembly, homodimer. It depends on Zn(2+) as a cofactor. Requires Co(2+) as cofactor. Glutathione serves as cofactor.

It localises to the cytoplasm. The enzyme catalyses N(2)-acetyl-L-ornithine + H2O = L-ornithine + acetate. It participates in amino-acid biosynthesis; L-arginine biosynthesis; L-ornithine from N(2)-acetyl-L-ornithine (linear): step 1/1. Its function is as follows. Catalyzes the hydrolysis of the amide bond of N(2)-acetylated L-amino acids. Cleaves the acetyl group from N-acetyl-L-ornithine to form L-ornithine, an intermediate in L-arginine biosynthesis pathway, and a branchpoint in the synthesis of polyamines. This is Acetylornithine deacetylase from Aliivibrio fischeri (strain ATCC 700601 / ES114) (Vibrio fischeri).